Here is a 421-residue protein sequence, read N- to C-terminus: MQSNDENIYFPANQYVNAGQYSPLQQSFSQNSQYDLFDGFAEFGFLEQVPATNMYSGSQSTQMEQNYLPNVNNSTRKRKAPGQNEQATVKRRQIGIEKWRLPSRSVVQPSADISDLRRPPISYVALCALACRNAPDMKITPAGVYAFVLHHWRYYRYANENWKNSVRHQLSSKEHFDEETFQPDPSNPTVRRKFYIVKNPNMIRQNLISDADFDFFRKDSRGIEFYQKMFAGQIGLPRSLFYQIIGNGIPFLAGPENSSMFYQLLGMGKVVGYLETRYFREHYRSEHAATEPKYEEDYANFTEKIPSNAENLMSYGAATERNFQKFDFTDEEIELFHLNISSYHSVQKTCKECNLPNWCTPSVGDVETYVFGRQVPMPVNTPVILQQFETVAEQEGIRNNPLEERKTTEDPRDISILEALA.

A DNA-binding region (fork-head) is located at residues Arg118 to Lys218.

The protein localises to the nucleus. Its function is as follows. Transcription factor. Regulates expression of a class of small RNAs, known as 21U-RNAs, perhaps acting redundantly with fkh-3 and fkh-5. This chain is Forkhead box protein fkh-4, found in Caenorhabditis elegans.